The chain runs to 364 residues: Oxidized low-density lipoprotein receptor 1 (364 aa).

Residues 1-21 (MAFDDKMKPVNGQPDQKSCGK) form a disordered region. The Cytoplasmic segment spans residues 1–31 (MAFDDKMKPVNGQPDQKSCGKKPKGLHLLSS). A helical; Signal-anchor for type II membrane protein membrane pass occupies residues 32–54 (TWWCPAAVTLAILCLVLSVTLIV). 2 S-palmitoyl cysteine lipidation sites follow: Cys35 and Cys45. The interval 55 to 242 (QQTQLLQVSD…GPCPQDWIWH (188 aa)) is neck. Residues 55–364 (QQTQLLQVSD…QKKANLLLTQ (310 aa)) lie on the Extracellular side of the membrane. Residues Asn72, Asn92, and Asn138 are each glycosylated (N-linked (GlcNAc...) asparagine). The stretch at 83 to 233 (QMSAQKKAEN…ALQRAANSSG (151 aa)) forms a coiled coil. Tandem repeats lie at residues 96-141 (ESKR…NASE), 142-187 (ESKW…KYSE), and 188-233 (ESQR…NSSG). Intrachain disulfides connect Cys235–Cys246, Cys262–Cys354, and Cys333–Cys346. Residues 242-355 (HKENCYLFHG…CILTAFSICQ (114 aa)) enclose the C-type lectin domain.

As to quaternary structure, homodimer; disulfide-linked. May form a hexamer composed of 3 homodimers. Interacts with HSP70. In terms of processing, N-glycosylated. Predominantly expressed in lung and at lower level in kidney. Expressed in macrophages but not in vascular smooth muscle cells.

The protein resides in the cell membrane. The protein localises to the membrane raft. Its subcellular location is the secreted. Receptor that mediates the recognition, internalization and degradation of oxidatively modified low density lipoprotein (oxLDL) by vascular endothelial cells. OxLDL is a marker of atherosclerosis that induces vascular endothelial cell activation and dysfunction, resulting in pro-inflammatory responses, pro-oxidative conditions and apoptosis. Its association with oxLDL induces the activation of NF-kappa-B through an increased production of intracellular reactive oxygen and a variety of pro-atherogenic cellular responses including a reduction of nitric oxide (NO) release, monocyte adhesion and apoptosis. In addition to binding oxLDL, it acts as a receptor for the HSP70 protein involved in antigen cross-presentation to naive T-cells in dendritic cells, thereby participating in cell-mediated antigen cross-presentation. Also involved in inflammatory process, by acting as a leukocyte-adhesion molecule at the vascular interface in endotoxin-induced inflammation. Also acts as a receptor for advanced glycation end (AGE) products, activated platelets, monocytes, apoptotic cells and both Gram-negative and Gram-positive bacteria. This Rattus norvegicus (Rat) protein is Oxidized low-density lipoprotein receptor 1 (Olr1).